The chain runs to 70 residues: Putative microRNA 17 host gene protein (70 aa).

Residues 1 to 20 (MFCHVDVKISSKRYTWTKLP) are Cytoplasmic-facing. Residues 21–43 (LNVPKLVLIYLQSHFVLFFFSMC) traverse the membrane as a helical segment. Residues 44 to 70 (QSIWERPAIGRATTSSASWMVGYDCLL) lie on the Extracellular side of the membrane.

As to expression, highly expressed in B-cell lymphoma and lung cancer.

It is found in the membrane. This Homo sapiens (Human) protein is Putative microRNA 17 host gene protein (MIR17HG).